The following is a 341-amino-acid chain: L-threonine 3-dehydrogenase (341 aa).

Cys38 contributes to the Zn(2+) binding site. Residues Thr40 and His43 each act as charge relay system in the active site. The Zn(2+) site is built by His63, Glu64, Cys93, Cys96, Cys99, and Cys107. NAD(+) contacts are provided by residues Ile175, Asp195, Arg200, 262-264 (LGI), and 286-287 (IY).

The protein belongs to the zinc-containing alcohol dehydrogenase family. In terms of assembly, homotetramer. Zn(2+) is required as a cofactor.

It localises to the cytoplasm. It catalyses the reaction L-threonine + NAD(+) = (2S)-2-amino-3-oxobutanoate + NADH + H(+). Its pathway is amino-acid degradation; L-threonine degradation via oxydo-reductase pathway; glycine from L-threonine: step 1/2. In terms of biological role, catalyzes the NAD(+)-dependent oxidation of L-threonine to 2-amino-3-ketobutyrate. The polypeptide is L-threonine 3-dehydrogenase (Enterobacter sp. (strain 638)).